Consider the following 135-residue polypeptide: Sex-regulated protein janus-A (135 aa).

K37 serves as a coordination point for substrate. The active-site Proton acceptor is H63. 104–106 (SQG) contributes to the substrate binding site.

This sequence belongs to the janus family.

Its function is as follows. JanA and janB regulate somatic sex differentiation. The polypeptide is Sex-regulated protein janus-A (janA) (Drosophila simulans (Fruit fly)).